A 498-amino-acid polypeptide reads, in one-letter code: Glycerol kinase (498 aa).

Residue T12 participates in ADP binding. ATP contacts are provided by T12, T13, and S14. Residue T12 coordinates sn-glycerol 3-phosphate. R16 contributes to the ADP binding site. Sn-glycerol 3-phosphate-binding residues include R82, E83, Y134, and D244. Positions 82, 83, 134, 244, and 245 each coordinate glycerol. Residues T266 and G310 each contribute to the ADP site. T266, G310, Q314, and G411 together coordinate ATP. The ADP site is built by G411 and N415.

This sequence belongs to the FGGY kinase family.

It catalyses the reaction glycerol + ATP = sn-glycerol 3-phosphate + ADP + H(+). It functions in the pathway polyol metabolism; glycerol degradation via glycerol kinase pathway; sn-glycerol 3-phosphate from glycerol: step 1/1. Inhibited by fructose 1,6-bisphosphate (FBP). In terms of biological role, key enzyme in the regulation of glycerol uptake and metabolism. Catalyzes the phosphorylation of glycerol to yield sn-glycerol 3-phosphate. The chain is Glycerol kinase from Chloroflexus aurantiacus (strain ATCC 29366 / DSM 635 / J-10-fl).